We begin with the raw amino-acid sequence, 976 residues long: MPLSTGLTLSSLNVMEKADNHYNMMTKQPPALSPVDMVSSRRGFNPIAFTPWPVTILSSLVYLAFIIPIIVVHHLVPPAPKESPEGVDLKEAWHDLQHLTRQYHPYNSHSNDEVHQWLLKRIHAISASSSARSGDTTGPDIFIFDDNQTNLTFSSVGVAAKSITGVYFESKNILVYIRGAEDDQEEWWESPDGEPSGKGGVLVNAHYDSVSTGYGATDNGVGVISTLQLLKYFTTPGHYPRKGLVLLFNDGEEDFLNGAYAFSQHPLSKFTHTFLNIEGAGAGGRAVLFRSTDTEVTRFYGNTEHPFGTVLARDAFQLGFIRSETDYHVFDGVFGMRGLDVAFMEPRSRYHTDQDDARHTSIDSVWHMLSAAIKTTEGLVSYTGDAFDGDNGNDGKLNNGAGTLGVWFDFYGSSFAVFELNTLFGHSVALLVVAPLLLIATCVTLYTLDKMYMFSMYTYLSESGGQVSLYGLRGLFRFPLILGISTALTIGLAFLLMKANPFIIYSSPYAVWNPSALHRAYAFTWMFGMMWVLLVIATVYQKQHGIASSYFIVFYFAGVSIATWISYLELFGLPTTQDYARRQIRITDRTPSSDSRLLAPSADELPPSGSAAGHDFNPEDVEDEEPTESTSLLRGQQRTTFANYASARSNSDGNISTNASLHPKDHRLEQRWSINLISSAWILQFLFVAPIVIILLGQLGLFLTSATYQIGADGGSQLVIYVGIAVLSVLILLPLFPFIHRFTYHIPTFLLFVLIGTLVYNLTAFPFSHSNRLKVAFVQEIDLETGKNQASLVGVEPYIHDIVRTIPSTTGKEVSCISRGYGGRAKCSWDGLKPRVVDAPYKEWITYNISQAKDDKHTRFEISGKNTRACKILFDSPIADFKVLGSVTDERIPHTGPKGVSEIRLWSRTWENTWTVDVEWTKKNANRQGKVMCIWSDDNDLKVIPALDEIRNFAPAWAAITKLRDGLVEGSHSFKL.

Over 1–51 (MPLSTGLTLSSLNVMEKADNHYNMMTKQPPALSPVDMVSSRRGFNPIAFTP) the chain is Cytoplasmic. Residues 52-72 (WPVTILSSLVYLAFIIPIIVV) form a helical membrane-spanning segment. The Vacuolar portion of the chain corresponds to 73-399 (HHLVPPAPKE…DNGNDGKLNN (327 aa)). Residues asparagine 147 and asparagine 150 are each glycosylated (N-linked (GlcNAc...) asparagine). Zn(2+) is bound by residues histidine 206 and aspartate 218. Glutamate 252 serves as the catalytic Proton acceptor. Glutamate 253, glutamate 278, and histidine 351 together coordinate Zn(2+). A helical transmembrane segment spans residues 400–420 (GAGTLGVWFDFYGSSFAVFEL). Topologically, residues 421–427 (NTLFGHS) are cytoplasmic. Residues 428–448 (VALLVVAPLLLIATCVTLYTL) form a helical membrane-spanning segment. Residues 449–477 (DKMYMFSMYTYLSESGGQVSLYGLRGLFR) lie on the Vacuolar side of the membrane. Residues 478 to 498 (FPLILGISTALTIGLAFLLMK) form a helical membrane-spanning segment. The Cytoplasmic segment spans residues 499–519 (ANPFIIYSSPYAVWNPSALHR). The helical transmembrane segment at 520-540 (AYAFTWMFGMMWVLLVIATVY) threads the bilayer. The Vacuolar portion of the chain corresponds to 541–550 (QKQHGIASSY). A helical membrane pass occupies residues 551–571 (FIVFYFAGVSIATWISYLELF). The Cytoplasmic portion of the chain corresponds to 572-675 (GLPTTQDYAR…HRLEQRWSIN (104 aa)). Residues 590-633 (TPSSDSRLLAPSADELPPSGSAAGHDFNPEDVEDEEPTESTSLL) are disordered. Residues 618 to 627 (PEDVEDEEPT) are compositionally biased toward acidic residues. The helical transmembrane segment at 676–696 (LISSAWILQFLFVAPIVIILL) threads the bilayer. At 697–718 (GQLGLFLTSATYQIGADGGSQL) the chain is on the vacuolar side. A helical membrane pass occupies residues 719–739 (VIYVGIAVLSVLILLPLFPFI). The Cytoplasmic portion of the chain corresponds to 740 to 745 (HRFTYH). The helical transmembrane segment at 746–766 (IPTFLLFVLIGTLVYNLTAFP) threads the bilayer. Residues 767-976 (FSHSNRLKVA…LVEGSHSFKL (210 aa)) lie on the Vacuolar side of the membrane. The N-linked (GlcNAc...) asparagine glycan is linked to asparagine 848.

This sequence belongs to the peptidase M28 family. Zn(2+) is required as a cofactor.

It localises to the vacuole membrane. In terms of biological role, may be involved in vacuolar sorting and osmoregulation. The polypeptide is Vacuolar membrane protease (Arthroderma otae (strain ATCC MYA-4605 / CBS 113480) (Microsporum canis)).